Consider the following 83-residue polypeptide: Mu-theraphotoxin-Hhn2o (83 aa).

An N-terminal signal peptide occupies residues 1-21; sequence MKASMFLALAGLVLLFVVGYA. Residues 22 to 48 constitute a propeptide that is removed on maturation; sequence SESEEKEFPIELLSKIFAVDVFKGEER. Cystine bridges form between Cys50–Cys65, Cys57–Cys70, and Cys64–Cys77. Leu81 carries the post-translational modification Leucine amide.

Belongs to the neurotoxin 10 (Hwtx-1) family. 15 (Hntx-3) subfamily. As to quaternary structure, monomer. Expressed by the venom gland.

The protein resides in the secreted. In terms of biological role, lethal neurotoxin. Selectively blocks tetrodotoxin-sensitive voltage-gated sodium channels (Nav). Does not affect tetrodotoxin-resistant voltage-gated sodium channels or calcium channels. The chain is Mu-theraphotoxin-Hhn2o from Cyriopagopus hainanus (Chinese bird spider).